A 483-amino-acid polypeptide reads, in one-letter code: MNKKIRVRYAPSPTGLLHIGNARTALFNYLFARHHGGDFIIRIEDTDRERHVEDGERSQLENLRWLGMDWDESPETHENYRQSERLPLYQKYIDQLLAEGKAYYSYKTPEELEADHAKQEAAGIPPHYINEYAGMSDDEKAAYIAERKAQNIEPVVRISVDEKAIYKWNDIVKGEIEFEGGNIGGDWVIQKRDGYPTYNFAVVVDDHDMQISHVIRGDDHIANTPKQLVVYNALGWEAPQFGHMTLIINSETGKKLSKRDTNTLQFIEDYRKKGYMSDAIFNFIALLGWNPGGEKEIFSCEELIELFDENRLSKSPAAFDQKKLDWMDNEYIKNADFAKVFELTKPFLVAANRFDERAKELVKLYQPQMKSADEIVELTELFYGDFPELTDEAREMLAAETTPLVLSTFRAKLAELPESDFTVENIFPLFKATQKETGVKGKMLWMPIRIAASGSMHGPELPETIALLGKEKVLAHLDAALNK.

Residues 11 to 21 carry the 'HIGH' region motif; it reads PSPTGLLHIGN. Positions 255-259 match the 'KMSKS' region motif; the sequence is KLSKR. K258 lines the ATP pocket.

It belongs to the class-I aminoacyl-tRNA synthetase family. Glutamate--tRNA ligase type 1 subfamily. In terms of assembly, monomer.

It localises to the cytoplasm. The enzyme catalyses tRNA(Glu) + L-glutamate + ATP = L-glutamyl-tRNA(Glu) + AMP + diphosphate. Catalyzes the attachment of glutamate to tRNA(Glu) in a two-step reaction: glutamate is first activated by ATP to form Glu-AMP and then transferred to the acceptor end of tRNA(Glu). This is Glutamate--tRNA ligase from Lactococcus lactis subsp. cremoris (strain MG1363).